Reading from the N-terminus, the 130-residue chain is Albumin-1 E (130 aa).

Positions 1–26 are cleaved as a signal peptide; it reads MASVKLASLIVLFATLGMFLTKNVGA. Cystine bridges form between C29-C46, C33-C48, and C41-C58. Propeptides lie at residues 64–69 and 123–130; these read VFLKGN and LLKSVSTA.

The C-terminal glycine may be removed from PA1b.

PA1b binds to basic 7S globulin (BG) and stimulates its phosphorylation activity. Involved in the signal transduction system to regulate the growth and differentiation as a hormone peptide. Toxic to various insects through binding to a high affinity binding site in the insect gut. The polypeptide is Albumin-1 E (Pisum sativum (Garden pea)).